The chain runs to 136 residues: Globin CTP-III (136 aa).

Residues 1 to 136 (LSADQISTVQ…TFFGMIFSKM (136 aa)) enclose the Globin domain. Histidine 87 provides a ligand contact to heme b.

This sequence belongs to the globin family. Monomer.

The protein is Globin CTP-III of Chironomus thummi piger (Midge).